Consider the following 420-residue polypeptide: Pre-mRNA-splicing factor RBM22 (420 aa).

Ala2 bears the N-acetylalanine mark. A phosphoserine mark is found at Ser4 and Ser102. Residues Lys139 and Lys149 each participate in a glycyl lysine isopeptide (Lys-Gly) (interchain with G-Cter in SUMO2) cross-link. The segment at 159–186 adopts a C3H1-type zinc-finger fold; sequence RNRPHICSFWVKGECKRGEECPYRHEKP. Lys212 bears the N6-acetyllysine mark. In terms of domain architecture, RRM spans 232–305; that stretch reads TTLYVGGLGD…RRLNVKWGRS (74 aa). Residue Lys290 forms a Glycyl lysine isopeptide (Lys-Gly) (interchain with G-Cter in SUMO2) linkage. Disordered regions lie at residues 303–343 and 371–420; these read GRSQ…AAEE and IAPP…HSSP. Residues 309–318 are compositionally biased toward basic and acidic residues; it reads RGKEKEKDGT.

The protein belongs to the SLT11 family. In terms of assembly, component of the pre-catalytic and catalytic spliceosome complexes. Component of the postcatalytic spliceosome P complex. Interacts with PDCD6; the interaction induces translocation of PDCD6 in the cytoplasm. Interacts with PPIL1.

It is found in the nucleus. The protein resides in the cytoplasm. Required for pre-mRNA splicing as component of the activated spliceosome. Involved in the first step of pre-mRNA splicing. Binds directly to the internal stem-loop (ISL) domain of the U6 snRNA and to the pre-mRNA intron near the 5' splice site during the activation and catalytic phases of the spliceosome cycle. Involved in both translocations of the nuclear SLU7 to the cytoplasm and the cytosolic calcium-binding protein PDCD6 to the nucleus upon cellular stress responses. This Rattus norvegicus (Rat) protein is Pre-mRNA-splicing factor RBM22 (Rbm22).